We begin with the raw amino-acid sequence, 146 residues long: Transcriptional regulator MraZ (146 aa).

SpoVT-AbrB domains lie at 4–46 (TVFR…SQTE) and 75–118 (TVKV…PEQR).

This sequence belongs to the MraZ family. Forms oligomers.

The protein localises to the cytoplasm. Its subcellular location is the nucleoid. The sequence is that of Transcriptional regulator MraZ from Mesomycoplasma hyopneumoniae (strain 232) (Mycoplasma hyopneumoniae).